The sequence spans 212 residues: MIVIFLGPPGAGKGTQGKKIAKKINLPHIAIGDIFRTIIKTSTSEAELINNYVKQGELIPNEIVNQVIKNFLLSSEYKNGYILDGYPRNLEQAKFFESFIKEKIKIIYFDVSDELLIKRILGRYSCKNCGKIYNRYFLQPKTDNVCDVCGSSTFDYRKDDNEEVIKKRIEVYKTETYPLIDYYKNSGNFYIVNGSKSEQEIEIDIQKILKIN.

ATP is bound at residue 10–15 (GAGKGT). The interval 30–59 (AIGDIFRTIIKTSTSEAELINNYVKQGELI) is NMP. Residues Arg-36, 57 to 59 (ELI), 85 to 88 (GYPR), and Gln-92 each bind AMP. The interval 122–160 (GRYSCKNCGKIYNRYFLQPKTDNVCDVCGSSTFDYRKDD) is LID. Arg-123 provides a ligand contact to ATP. Residues Cys-126 and Cys-129 each contribute to the Zn(2+) site. An ATP-binding site is contributed by 132-133 (IY). Residues Cys-146 and Cys-149 each contribute to the Zn(2+) site. AMP-binding residues include Arg-157 and Arg-168. Lys-196 is a binding site for ATP.

Belongs to the adenylate kinase family. As to quaternary structure, monomer.

Its subcellular location is the cytoplasm. The catalysed reaction is AMP + ATP = 2 ADP. It functions in the pathway purine metabolism; AMP biosynthesis via salvage pathway; AMP from ADP: step 1/1. Functionally, catalyzes the reversible transfer of the terminal phosphate group between ATP and AMP. Plays an important role in cellular energy homeostasis and in adenine nucleotide metabolism. The polypeptide is Adenylate kinase (Rickettsia africae (strain ESF-5)).